We begin with the raw amino-acid sequence, 184 residues long: Gastrokine-1 (184 aa).

Residues 1–20 (MKLTMFVVGLLGLLAAPGFA) form the signal peptide. One can recognise a BRICHOS domain in the interval 54–148 (NNGWDSWNSL…MCRGIPTYVA (95 aa)). Cys-81 and Cys-140 are joined by a disulfide.

The protein belongs to the gastrokine family. In terms of tissue distribution, expressed in the stomach. Highly expressed specifically in surface cells of the antrum mucosa from where it is secreted.

Its subcellular location is the secreted. The protein localises to the cytoplasmic granule. The protein resides in the golgi apparatus. Functionally, has mitogenic activity and may be involved in maintaining the integrity of the gastric mucosal epithelium. The protein is Gastrokine-1 (Gkn1) of Mus musculus (Mouse).